Consider the following 248-residue polypeptide: Mannose-binding protein C (248 aa).

A signal peptide spans 1–20; the sequence is MSLFPSLPLLLLSMVAASYS. Residues 42-99 form the Collagen-like domain; sequence GINGFPGKDGRDGTKGEKGEPGQGLRGLQGPPGKLGPPGNPGPSGSPGPKGQKGDPGK. A disordered region spans residues 43-113; sequence INGFPGKDGR…DSSLAASERK (71 aa). The residue at position 47 (P47) is a Hydroxyproline. A compositionally biased stretch (basic and acidic residues) spans 49-61; the sequence is KDGRDGTKGEKGE. P73, P79, P82, and P88 each carry hydroxyproline. Pro residues predominate over residues 75 to 87; it reads KLGPPGNPGPSGS. The segment covering 93 to 102 has biased composition (basic and acidic residues); sequence QKGDPGKSPD. The stretch at 112–130 forms a coiled coil; it reads RKALQTEMARIKKWLTFSL. Positions 134-245 constitute a C-type lectin domain; it reads VGNKFFLTNG…CSTSHLAVCE (112 aa). 2 cysteine pairs are disulfide-bonded: C155-C244 and C222-C236.

Oligomeric complex of 3 or more homotrimers. Interacts with MASP1 and MASP2. Interacts with MEP1A and MEP1B and may inhibit their catalytic activity. Interacts with CR1 (via Sushi 24 and Sushi 25 domains). As to quaternary structure, (Microbial infection) Interacts with SARS coronavirus-2/SARS-CoV-2 Spike glycoprotein homotrimer; the interaction is calcium-dependent and modulated by Spike glycoprotein glycosylation state. In terms of tissue distribution, plasma protein produced mainly in the liver.

It localises to the secreted. In terms of biological role, calcium-dependent lectin involved in innate immune defense. Binds mannose, fucose and N-acetylglucosamine on different microorganisms and activates the lectin complement pathway. Binds to late apoptotic cells, as well as to apoptotic blebs and to necrotic cells, but not to early apoptotic cells, facilitating their uptake by macrophages. May bind DNA. Upon SARS coronavirus-2/SARS-CoV-2 infection, activates the complement lectin pathway which leads to the inhibition SARS-CoV-2 infection and a reduction of the induced inflammatory response. This chain is Mannose-binding protein C, found in Homo sapiens (Human).